Consider the following 270-residue polypeptide: 5'-AMP-activated protein kinase subunit beta-1 (270 aa).

The segment at 1–44 (MGNTSSERAALERQAGHKTPRRDSSGGAKDGDRPKILMDSPEDA) is disordered. The N-myristoyl glycine moiety is linked to residue Gly2. The residue at position 4 (Thr4) is a Phosphothreonine. Phosphoserine is present on residues Ser5 and Ser6. Residues 9–36 (AALERQAGHKTPRRDSSGGAKDGDRPKI) are compositionally biased toward basic and acidic residues. Position 19 is a phosphothreonine (Thr19). Phosphoserine; by autocatalysis occurs at positions 24 and 25. Phosphoserine is present on residues Ser40, Ser96, and Ser101. Residues 68–163 (EANDKAPAQA…QVKKTDFEVF (96 aa)) form a glycogen-binding domain region. Phosphoserine; by autocatalysis is present on Ser108. Thr148 bears the Phosphothreonine mark. Ser182 carries the phosphoserine modification. Position 201 is an N6-succinyllysine (Lys201).

It belongs to the 5'-AMP-activated protein kinase beta subunit family. In terms of assembly, AMPK is a heterotrimer of an alpha catalytic subunit (PRKAA1 or PRKAA2), a beta (PRKAB1 or PRKAB2) and a gamma non-catalytic subunits (PRKAG1, PRKAG2 or PRKAG3). Interacts with FNIP1 and FNIP2. In terms of processing, phosphorylated when associated with the catalytic subunit (PRKAA1 or PRKAA2). Phosphorylated by ULK1; leading to negatively regulate AMPK activity and suggesting the existence of a regulatory feedback loop between ULK1 and AMPK.

Its function is as follows. Non-catalytic subunit of AMP-activated protein kinase (AMPK), an energy sensor protein kinase that plays a key role in regulating cellular energy metabolism. In response to reduction of intracellular ATP levels, AMPK activates energy-producing pathways and inhibits energy-consuming processes: inhibits protein, carbohydrate and lipid biosynthesis, as well as cell growth and proliferation. AMPK acts via direct phosphorylation of metabolic enzymes, and by longer-term effects via phosphorylation of transcription regulators. Also acts as a regulator of cellular polarity by remodeling the actin cytoskeleton; probably by indirectly activating myosin. Beta non-catalytic subunit acts as a scaffold on which the AMPK complex assembles, via its C-terminus that bridges alpha (PRKAA1 or PRKAA2) and gamma subunits (PRKAG1, PRKAG2 or PRKAG3). In Mus musculus (Mouse), this protein is 5'-AMP-activated protein kinase subunit beta-1 (Prkab1).